Reading from the N-terminus, the 447-residue chain is MSTMTPAEIVSELDKHIIGQAKAKKAVAVALRNRWRRQQVGEPLRQEITPKNILMIGPTGVGKTEIARRLAKLADAPFVKIEATKFTEVGYVGRDVDSIVRDLIEISVKQTREAEMRKVRSKATDQAEDRILDILLPQPRAVGFGGNADHANDDNNATRQTFRKRLREGQLDDKEVELDLEQPSAGMDIMAPPGMEEMTEQIRSMFSNLGSGKKQRRKVKIKEALKLLTDEEAAKMLNDEEVKTKAVQNVEQNGIVFLDEIDKITSRNNEGSGGEVSRQGVQRDLLPLVEGTTVNTKYGMVKTDHILFIASGAFHLAKPSDLIPELQGRFPIRVELDSLSVEDFEAILDATDASLVKQYQALLATEDVQLEFAADGIRRLAEIAYSVNEKTENIGARRLYTVIEKLLEEVSFSAGNHAGECVTIDATYVDRALGEVAQDEDLSRYVL.

ATP is bound by residues Ile18, 60–65 (GVGKTE), Asp259, Glu325, and Arg397.

The protein belongs to the ClpX chaperone family. HslU subfamily. A double ring-shaped homohexamer of HslV is capped on each side by a ring-shaped HslU homohexamer. The assembly of the HslU/HslV complex is dependent on binding of ATP.

Its subcellular location is the cytoplasm. Its function is as follows. ATPase subunit of a proteasome-like degradation complex; this subunit has chaperone activity. The binding of ATP and its subsequent hydrolysis by HslU are essential for unfolding of protein substrates subsequently hydrolyzed by HslV. HslU recognizes the N-terminal part of its protein substrates and unfolds these before they are guided to HslV for hydrolysis. This Burkholderia ambifaria (strain MC40-6) protein is ATP-dependent protease ATPase subunit HslU.